Consider the following 376-residue polypeptide: CYP enzymes assisting alcohol dehydrogenase (376 aa).

Positions 43, 45, 64, 94, 97, 100, 108, and 173 each coordinate Zn(2+). Residue threonine 45 coordinates NAD(+). Substrate contacts are provided by threonine 45 and histidine 64. Residues 199 to 204 (GLGAVG), aspartate 223, lysine 228, 294 to 296 (LGA), phenylalanine 320, and lysine 371 contribute to the NAD(+) site.

The protein belongs to the zinc-containing alcohol dehydrogenase family. Class-III subfamily. In terms of assembly, homodimer. The cofactor is Zn(2+).

It functions in the pathway alkaloid biosynthesis. Its function is as follows. May be a positive catalyzer of strictosidine production by assisting secologanin biosynthesis, thus being involved in monoterpene indole alkaloids accumulation. This chain is CYP enzymes assisting alcohol dehydrogenase, found in Catharanthus roseus (Madagascar periwinkle).